We begin with the raw amino-acid sequence, 100 residues long: NADH-quinone oxidoreductase subunit K 2 (100 aa).

3 helical membrane-spanning segments follow: residues 4–24 (LWWF…GVLL), 28–48 (ILVV…NFIA), and 60–80 (IFAI…LGIL).

The protein belongs to the complex I subunit 4L family. As to quaternary structure, NDH-1 is composed of 14 different subunits. Subunits NuoA, H, J, K, L, M, N constitute the membrane sector of the complex.

It localises to the cell inner membrane. The catalysed reaction is a quinone + NADH + 5 H(+)(in) = a quinol + NAD(+) + 4 H(+)(out). Its function is as follows. NDH-1 shuttles electrons from NADH, via FMN and iron-sulfur (Fe-S) centers, to quinones in the respiratory chain. The immediate electron acceptor for the enzyme in this species is believed to be ubiquinone. Couples the redox reaction to proton translocation (for every two electrons transferred, four hydrogen ions are translocated across the cytoplasmic membrane), and thus conserves the redox energy in a proton gradient. This chain is NADH-quinone oxidoreductase subunit K 2, found in Rhizobium etli (strain CIAT 652).